Consider the following 631-residue polypeptide: Double-strand-break repair protein rad21 homolog (631 aa).

S46 carries the post-translational modification Phosphoserine. K48 participates in a covalent cross-link: Glycyl lysine isopeptide (Lys-Gly) (interchain with G-Cter in SUMO2). The interval 126-282 (DIDVAQQFSL…GGPDSPDSVD (157 aa)) is required for interaction with SMARCA5. At S153 the chain carries Phosphoserine. The interval 154–171 (ILQENDFGDFGMDDREIM) is interaction with NIPBL. S175 carries the post-translational modification Phosphoserine. K216 is covalently cross-linked (Glycyl lysine isopeptide (Lys-Gly) (interchain with G-Cter in SUMO2)). Residue S249 is modified to Phosphoserine. Positions 258–285 (QPAHDDMDEDDNVSMGGPDSPDSVDPVE) are disordered. The segment covering 271-285 (SMGGPDSPDSVDPVE) has biased composition (low complexity). The tract at residues 287–403 (MPTMTDQTTL…TPLVPEDLRK (117 aa)) is interaction with WAPL and PDS5B. Positions 362 to 403 (MWKETGGVEKLFSLPAQPLWNNRLLKLFTRCLTPLVPEDLRK) are interaction with STAG1. Phosphothreonine is present on T394. K418 is covalently cross-linked (Glycyl lysine isopeptide (Lys-Gly) (interchain with G-Cter in SUMO2)). A compositionally biased stretch (basic and acidic residues) spans 423–440 (PEVPREDQQQQHQQRDVI). Disordered regions lie at residues 423–489 (PEVP…EPVM) and 517–558 (PELE…RWNK). S454 carries the phosphoserine modification. Positions 522 to 532 (LPEKEKEKEKE) are enriched in basic and acidic residues. Acidic residues predominate over residues 533 to 551 (KEDDEEEEDEDASGGDQDQ). S545 carries the post-translational modification Phosphoserine. At T623 the chain carries Phosphothreonine.

This sequence belongs to the rad21 family. Component of the cohesin complex, which consists of an SMC1A/B and SMC3 heterodimer core and 2 non-Smc subunits RAD21 and STAG1/SA1, STAG2/SA2 or STAG3/SA3. Interacts (via C-terminus) with SMC1A and (via N-terminus) with SMC3; these interactions are direct. The cohesin complex interacts with NUMA1. The cohesin complex also interacts with CDCA5, PDS5A and PDS5B; this interaction might regulate the ability of the cohesin complex to mediate sister chromatid cohesion. The interaction with PDS5B is direct and is stimulated by STAG1/SA1. The cohesin complex interacts with the cohesin loading complex subunits NIPBL/Scc2 (via HEAT repeats) and MAU2/Scc4. NIPBL directly contacts all members of the complex, RAD21, SMC1A/B, SMC3 and STAG1. The cohesin complex interacts with DDX11/ChIR1. Directly interacts with WAPL; this interaction is stimulated by STAG1/SA1. Interacts with the ISWI chromatin remodeling complex component SMARCA5/SNF2h; the interaction is direct. Interacts with the NuRD complex component CHD4; the interaction is direct. Cleaved by separase/ESPL1 at the onset of anaphase; this cleavage is required for sister chromatid separation and cytokinesis. Cleaved by caspase-3/CASP3 or caspase-7/CASP7 at the beginning of apoptosis. In terms of processing, phosphorylated; becomes hyperphosphorylated in M phase of cell cycle. The large dissociation of cohesin from chromosome arms during prophase may be partly due to its phosphorylation by PLK1. Expressed in the gut (at protein level).

The protein resides in the nucleus. It is found in the nucleus matrix. Its subcellular location is the chromosome. The protein localises to the centromere. It localises to the cytoplasm. The protein resides in the cytoskeleton. It is found in the spindle pole. Its subcellular location is the cytosol. Its function is as follows. As a member of the cohesin complex, involved in sister chromatid cohesion from the time of DNA replication in S phase to their segregation in mitosis, a function that is essential for proper chromosome segregation, post-replicative DNA repair, and the prevention of inappropriate recombination between repetitive regions. The cohesin complex may also play a role in spindle pole assembly during mitosis. In interphase, cohesins may function in the control of gene expression by binding to numerous sites within the genome. May control RUNX1 gene expression. Binds to and represses APOB gene promoter. May play a role in embryonic gut development, possibly through the regulation of enteric neuron development. In terms of biological role, may promote apoptosis. This is Double-strand-break repair protein rad21 homolog (RAD21) from Homo sapiens (Human).